The primary structure comprises 346 residues: Dihydroorotase (346 aa).

Histidine 13 and histidine 15 together coordinate Zn(2+). Residues 15-17 and asparagine 41 each bind substrate; that span reads HLR. Residues lysine 99, histidine 136, and histidine 174 each coordinate Zn(2+). The residue at position 99 (lysine 99) is an N6-carboxylysine. Histidine 136 serves as a coordination point for substrate. A substrate-binding site is contributed by leucine 219. Aspartate 247 lines the Zn(2+) pocket. The active site involves aspartate 247. Substrate is bound by residues histidine 251 and alanine 263.

It belongs to the metallo-dependent hydrolases superfamily. DHOase family. Class II DHOase subfamily. Homodimer. Zn(2+) serves as cofactor.

It catalyses the reaction (S)-dihydroorotate + H2O = N-carbamoyl-L-aspartate + H(+). Its pathway is pyrimidine metabolism; UMP biosynthesis via de novo pathway; (S)-dihydroorotate from bicarbonate: step 3/3. Catalyzes the reversible cyclization of carbamoyl aspartate to dihydroorotate. The chain is Dihydroorotase from Rhizobium rhizogenes (strain K84 / ATCC BAA-868) (Agrobacterium radiobacter).